The primary structure comprises 466 residues: L-seryl-tRNA(Sec) selenium transferase (466 aa).

K294 is modified (N6-(pyridoxal phosphate)lysine).

It belongs to the SelA family. It depends on pyridoxal 5'-phosphate as a cofactor.

It is found in the cytoplasm. The enzyme catalyses L-seryl-tRNA(Sec) + selenophosphate + H(+) = L-selenocysteinyl-tRNA(Sec) + phosphate. The protein operates within aminoacyl-tRNA biosynthesis; selenocysteinyl-tRNA(Sec) biosynthesis; selenocysteinyl-tRNA(Sec) from L-seryl-tRNA(Sec) (bacterial route): step 1/1. In terms of biological role, converts seryl-tRNA(Sec) to selenocysteinyl-tRNA(Sec) required for selenoprotein biosynthesis. This Carboxydothermus hydrogenoformans (strain ATCC BAA-161 / DSM 6008 / Z-2901) protein is L-seryl-tRNA(Sec) selenium transferase.